Reading from the N-terminus, the 70-residue chain is ATP synthase subunit c (70 aa).

2 helical membrane-spanning segments follow: residues 4–24 (IAAGIAMFGAALGAGIGNGLV) and 47–67 (FIGVGLIESMPIISFVVALMV).

Belongs to the ATPase C chain family. As to quaternary structure, F-type ATPases have 2 components, F(1) - the catalytic core - and F(0) - the membrane proton channel. F(1) has five subunits: alpha(3), beta(3), gamma(1), delta(1), epsilon(1). F(0) has three main subunits: a(1), b(2) and c(10-14). The alpha and beta chains form an alternating ring which encloses part of the gamma chain. F(1) is attached to F(0) by a central stalk formed by the gamma and epsilon chains, while a peripheral stalk is formed by the delta and b chains.

The protein resides in the cell membrane. F(1)F(0) ATP synthase produces ATP from ADP in the presence of a proton or sodium gradient. F-type ATPases consist of two structural domains, F(1) containing the extramembraneous catalytic core and F(0) containing the membrane proton channel, linked together by a central stalk and a peripheral stalk. During catalysis, ATP synthesis in the catalytic domain of F(1) is coupled via a rotary mechanism of the central stalk subunits to proton translocation. In terms of biological role, key component of the F(0) channel; it plays a direct role in translocation across the membrane. A homomeric c-ring of between 10-14 subunits forms the central stalk rotor element with the F(1) delta and epsilon subunits. The chain is ATP synthase subunit c from Lactiplantibacillus plantarum (strain ATCC BAA-793 / NCIMB 8826 / WCFS1) (Lactobacillus plantarum).